The chain runs to 132 residues: Intraflagellar transport protein 20 homolog (132 aa).

The tract at residues 70–132 (MKAIGARNLL…EFIDQFIFQK (63 aa)) is IFT57-binding. The stretch at 74–114 (GARNLLKSIAKQREAQQQQLQALIAEKKMQLERYRVEYEAL) forms a coiled coil.

As to quaternary structure, component of the IFT complex B, at least composed of IFT20, IFT22, IFT25, IFT27, IFT46, IFT52, TRAF3IP1/IFT54, IFT57, IFT74, IFT80, IFT81, and IFT88. Interacts directly with IFT57 and KIF3B/Kinesin II subunit. Interacts with IFT88. Interacts with CEP83. Interacts with SPEF2 (via C-terminus). Interacts with CBL and CBLB. Interacts with TRIP11. Interacts with TTC21A. Interacts with SPATA1. Interacts with USH1G. Interacts with CCDC146. Interacts with CEP78; regulating IFT20 stability and localization. In terms of tissue distribution, expressed in almost all tissues.

Its subcellular location is the golgi apparatus. The protein localises to the cis-Golgi network. It localises to the cytoplasm. It is found in the cytoskeleton. The protein resides in the microtubule organizing center. Its subcellular location is the centrosome. The protein localises to the centriole. It localises to the cilium basal body. It is found in the cell projection. The protein resides in the cilium. Its subcellular location is the cytoplasmic vesicle. The protein localises to the secretory vesicle. It localises to the acrosome. Its function is as follows. Part of intraflagellar transport (IFT) particles involved in ciliary process assembly. May play a role in the trafficking of ciliary membrane proteins from the Golgi complex to the cilium. Regulates the platelet-derived growth factor receptor-alpha (PDGFRA) signaling pathway. Required for protein stability of E3 ubiquitin ligases CBL and CBLB that mediate ubiquitination and internalization of PDGFRA for proper feedback inhibition of PDGFRA signaling. Essential for male fertility. Plays an important role in spermatogenesis, particularly spermiogenesis, when germ cells form flagella. May play a role in the transport of flagellar proteins ODF2 and SPAG16 to build sperm flagella and in the removal of redundant sperm cytoplasm. Also involved in autophagy since it is required for trafficking of ATG16L and the expansion of the autophagic compartment. This chain is Intraflagellar transport protein 20 homolog (IFT20), found in Homo sapiens (Human).